Reading from the N-terminus, the 239-residue chain is Phosphoribosylaminoimidazole-succinocarboxamide synthase (239 aa).

It belongs to the SAICAR synthetase family.

It catalyses the reaction 5-amino-1-(5-phospho-D-ribosyl)imidazole-4-carboxylate + L-aspartate + ATP = (2S)-2-[5-amino-1-(5-phospho-beta-D-ribosyl)imidazole-4-carboxamido]succinate + ADP + phosphate + 2 H(+). It functions in the pathway purine metabolism; IMP biosynthesis via de novo pathway; 5-amino-1-(5-phospho-D-ribosyl)imidazole-4-carboxamide from 5-amino-1-(5-phospho-D-ribosyl)imidazole-4-carboxylate: step 1/2. The polypeptide is Phosphoribosylaminoimidazole-succinocarboxamide synthase (Bacillus cereus (strain AH187)).